The primary structure comprises 108 residues: Small ribosomal subunit protein bS16 (108 aa).

Residues 82 to 108 form a disordered region; the sequence is ESKFSKNTQTENKKPVSKKTTKKSKDN. Residues 96–108 are compositionally biased toward basic residues; it reads PVSKKTTKKSKDN.

Belongs to the bacterial ribosomal protein bS16 family.

This is Small ribosomal subunit protein bS16 from Mycoplasma mycoides subsp. mycoides SC (strain CCUG 32753 / NCTC 10114 / PG1).